The chain runs to 107 residues: Integration host factor subunit alpha (107 aa).

This sequence belongs to the bacterial histone-like protein family. Heterodimer of an alpha and a beta chain.

In terms of biological role, this protein is one of the two subunits of integration host factor, a specific DNA-binding protein that functions in genetic recombination as well as in transcriptional and translational control. This is Integration host factor subunit alpha from Brucella abortus (strain S19).